The primary structure comprises 65 residues: UPF0434 protein PSHAa1659 (65 aa).

Belongs to the UPF0434 family.

The sequence is that of UPF0434 protein PSHAa1659 from Pseudoalteromonas translucida (strain TAC 125).